Reading from the N-terminus, the 677-residue chain is Serine/threonine-protein kinase YPK2/YKR2 (677 aa).

A compositionally biased stretch (basic residues) spans 1-12 (MHSWRISKFKLG). Residues 1–115 (MHSWRISKFK…ETQGPSSESG (115 aa)) form a disordered region. The span at 41–56 (KHHDGSPKNHNHEHEH) shows a compositional bias: basic and acidic residues. Composition is skewed to polar residues over residues 61-93 (INTN…NDNS) and 101-115 (SQSS…SESG). Phosphothreonine occurs at positions 63 and 66. Position 72 is a phosphoserine (serine 72). The Protein kinase domain occupies 344–599 (FDLLKVIGKG…TDEIRNHPFF (256 aa)). ATP-binding positions include 350 to 358 (IGKGSFGKV) and lysine 373. Aspartate 467 serves as the catalytic Proton acceptor. Phosphothreonine is present on threonine 499. Phosphothreonine; by PKH2 is present on threonine 501. One can recognise an AGC-kinase C-terminal domain in the interval 600–670 (KDISWKKLLL…IGDEQLGDSP (71 aa)). Position 641 is a phosphoserine; by TOR2 (serine 641). At serine 650 the chain carries Phosphoserine. Threonine 659 carries the phosphothreonine; by TOR2 modification. Serine 669 carries the phosphoserine modification.

The protein belongs to the protein kinase superfamily. AGC Ser/Thr protein kinase family. RAC subfamily. In terms of processing, autophosphorylated. Phosphorylated by PKH2 and TOR2.

The protein resides in the cytoplasm. The enzyme catalyses L-seryl-[protein] + ATP = O-phospho-L-seryl-[protein] + ADP + H(+). It catalyses the reaction L-threonyl-[protein] + ATP = O-phospho-L-threonyl-[protein] + ADP + H(+). Activated by phytosphingosine (PHS), a sphingoid long chain base. Activated by PKH2 phosphorylation. Kinase activity is regulated by TOR2 via direct phosphorylation of Ser-641 and Thr-659. In terms of biological role, plays an essential role in the proliferation of yeast cells. Involved in a signaling pathway, required for optimal cell wall integrity, that acts in parallel with the PKC1-SLT2-dependent pathway. A substrate of TOR complex 2 (TORC2) and required for TORC2 to regulate spatial aspects of cell growth. Phosphorylation of residue Thr-501 is indispensable for function. May act as a downstream kinase in the sphingolipid-mediated signaling pathway. The sequence is that of Serine/threonine-protein kinase YPK2/YKR2 (YPK2) from Saccharomyces cerevisiae (strain ATCC 204508 / S288c) (Baker's yeast).